The chain runs to 210 residues: Orotate phosphoribosyltransferase (210 aa).

5-phospho-alpha-D-ribose 1-diphosphate contacts are provided by residues arginine 96, lysine 100, histidine 102, and 122–130 (EDLISTGGS). Serine 126 is a binding site for orotate.

Belongs to the purine/pyrimidine phosphoribosyltransferase family. PyrE subfamily. In terms of assembly, homodimer. Mg(2+) is required as a cofactor.

The catalysed reaction is orotidine 5'-phosphate + diphosphate = orotate + 5-phospho-alpha-D-ribose 1-diphosphate. It participates in pyrimidine metabolism; UMP biosynthesis via de novo pathway; UMP from orotate: step 1/2. In terms of biological role, catalyzes the transfer of a ribosyl phosphate group from 5-phosphoribose 1-diphosphate to orotate, leading to the formation of orotidine monophosphate (OMP). This chain is Orotate phosphoribosyltransferase (pyrE), found in Streptococcus pneumoniae serotype 19F (strain G54).